The sequence spans 117 residues: Translation initiation factor 1A (117 aa).

The S1-like domain maps to 17–92; it reads IRVPLPDRSK…ERGDIVYRYT (76 aa).

The protein belongs to the eIF-1A family.

Seems to be required for maximal rate of protein biosynthesis. Enhances ribosome dissociation into subunits and stabilizes the binding of the initiator Met-tRNA(I) to 40 S ribosomal subunits. This is Translation initiation factor 1A from Thermococcus kodakarensis (strain ATCC BAA-918 / JCM 12380 / KOD1) (Pyrococcus kodakaraensis (strain KOD1)).